A 363-amino-acid polypeptide reads, in one-letter code: Serpentine receptor class T-55 (363 aa).

The signal sequence occupies residues 1–18 (MKLRHFLIFLMLIPISSS). A run of 7 helical transmembrane segments spans residues 70 to 90 (IYYI…IWVF), 107 to 127 (VFIG…PGFV), 143 to 163 (IVGK…AFLG), 187 to 207 (WLTV…TVLF), 231 to 251 (FLYF…ACLC), 278 to 298 (ICIS…FVLP), and 303 to 323 (FFHV…IMYI).

It belongs to the nematode receptor-like protein srt family.

It localises to the membrane. The polypeptide is Serpentine receptor class T-55 (srt-55) (Caenorhabditis elegans).